The sequence spans 182 residues: Glutathione-regulated potassium-efflux system ancillary protein KefG (182 aa).

Belongs to the NAD(P)H dehydrogenase (quinone) family. KefG subfamily. Interacts with KefB.

The protein localises to the cell inner membrane. The catalysed reaction is a quinone + NADH + H(+) = a quinol + NAD(+). The enzyme catalyses a quinone + NADPH + H(+) = a quinol + NADP(+). Its function is as follows. Regulatory subunit of a potassium efflux system that confers protection against electrophiles. Required for full activity of KefB. The sequence is that of Glutathione-regulated potassium-efflux system ancillary protein KefG from Yersinia pestis bv. Antiqua (strain Nepal516).